A 323-amino-acid polypeptide reads, in one-letter code: Beta-ketoacyl-[acyl-carrier-protein] synthase III (323 aa).

Catalysis depends on residues cysteine 113 and histidine 250. An ACP-binding region spans residues 251 to 255; that stretch reads QANRR. Asparagine 280 is a catalytic residue.

It belongs to the thiolase-like superfamily. FabH family. As to quaternary structure, homodimer.

The protein localises to the cytoplasm. It catalyses the reaction malonyl-[ACP] + acetyl-CoA + H(+) = 3-oxobutanoyl-[ACP] + CO2 + CoA. It functions in the pathway lipid metabolism; fatty acid biosynthesis. Its function is as follows. Catalyzes the condensation reaction of fatty acid synthesis by the addition to an acyl acceptor of two carbons from malonyl-ACP. Catalyzes the first condensation reaction which initiates fatty acid synthesis and may therefore play a role in governing the total rate of fatty acid production. Possesses both acetoacetyl-ACP synthase and acetyl transacylase activities. Its substrate specificity determines the biosynthesis of branched-chain and/or straight-chain of fatty acids. The sequence is that of Beta-ketoacyl-[acyl-carrier-protein] synthase III from Allorhizobium ampelinum (strain ATCC BAA-846 / DSM 112012 / S4) (Agrobacterium vitis (strain S4)).